The following is a 441-amino-acid chain: G-protein coupled receptor family C group 5 member C (441 aa).

Residues 1 to 22 (MATHKTLLMCLGLPLFFPGALA) form the signal peptide. The Extracellular segment spans residues 23–49 (QNHAPPGCSPDLDPLYYNLCDRSGAWG). A helical transmembrane segment spans residues 50 to 70 (IVLEAVAGAGIITTFVLTIIL). Residues 71-84 (VASLPFVQDTKKRS) are Cytoplasmic-facing. The helical transmembrane segment at 85 to 105 (LLGTQVFFLLGTLGLFCLVFA) threads the bilayer. Residues 106-119 (CVVKPDFSTCASRR) lie on the Extracellular side of the membrane. The chain crosses the membrane as a helical span at residues 120–140 (FLFGVLFAICFSCLIAHTLSL). The Cytoplasmic portion of the chain corresponds to 141–154 (NFLARKNHGPRGWV). The helical transmembrane segment at 155 to 175 (IFTVALLLTLVEVIINTEWLI) threads the bilayer. Topologically, residues 176–207 (ITLVRGGGQVSTPGNGSADWTVTSPCAIANMD) are extracellular. The N-linked (GlcNAc...) asparagine glycan is linked to N190. A helical membrane pass occupies residues 208–228 (FVMALIYVMLLLLAAFLGAWP). Residues 229–240 (TLCGRFKRWRKH) are Cytoplasmic-facing. A helical membrane pass occupies residues 241-261 (GVFVLLTTATSIAIWVVWIVM). The Extracellular segment spans residues 262–278 (YTYGNKQHHSPTWDDPT). A helical membrane pass occupies residues 279–299 (LAIALAANAWTFVFFYVIPEV). At 300-441 (SQVTKPSPEQ…DQSPKNKTRW (142 aa)) the chain is on the cytoplasmic side. A phosphoserine mark is found at S343, S382, S402, and S405. Y413 bears the Phosphotyrosine mark. The disordered stretch occupies residues 419 to 441 (QVATPTKDGKISQDQSPKNKTRW). The residue at position 422 (T422) is a Phosphothreonine. The segment covering 430–441 (SQDQSPKNKTRW) has biased composition (polar residues). S434 carries the phosphoserine modification.

Belongs to the G-protein coupled receptor 3 family.

It is found in the cell membrane. In terms of biological role, this retinoic acid-inducible G-protein coupled receptor provide evidence for a possible interaction between retinoid and G-protein signaling pathways. The sequence is that of G-protein coupled receptor family C group 5 member C (Gprc5c) from Rattus norvegicus (Rat).